The chain runs to 692 residues: Furin-like protease kpc-1 (692 aa).

Residues 1-33 form the signal peptide; the sequence is MSNISWYRHCSVRLQLVTLALFLLLGSASLGSA. N-linked (GlcNAc...) asparagine glycosylation is present at asparagine 3. The propeptide occupies 34–139; that stretch reads HIDEEFEDDV…QQVAKRRVKR (106 aa). Residues 140–670 are Lumenal-facing; sequence GYRRIRRHTD…RSVQMEATSS (531 aa). A disordered region spans residues 152–177; it reads DIFEEDDDGTQISKSRNRKHPDPNDP. Aspartate 176 contacts Ca(2+). One can recognise a Peptidase S8 domain in the interval 182–503; that stretch reads MWYLNRGEHH…YGLMDAGAMV (322 aa). Aspartate 221 functions as the Charge relay system in the catalytic mechanism. Aspartate 222 contacts substrate. Residues aspartate 230, aspartate 242, aspartate 247, and aspartate 249 each coordinate Ca(2+). The disordered stretch occupies residues 230–249; it reads DISPNYDERASYDVNDRDND. 259 to 260 is a substrate binding site; sequence EN. Catalysis depends on histidine 262, which acts as the Charge relay system. Residue isoleucine 273 participates in Ca(2+) binding. Asparagine 275 is a glycosylation site (N-linked (GlcNAc...) asparagine). Ca(2+)-binding residues include asparagine 276, leucine 278, and isoleucine 280. 2 disulfide bridges follow: cysteine 279-cysteine 428 and cysteine 371-cysteine 401. Substrate contacts are provided by residues glutamate 304, 321 to 326, aspartate 332, and 360 to 363; these read SWGPDD and ASGN. Aspartate 326 provides a ligand contact to Ca(2+). Aspartate 369 contacts Ca(2+). Residues aspartate 374 and tyrosine 376 each coordinate substrate. Glutamate 399 is a binding site for Ca(2+). Serine 436 functions as the Charge relay system in the catalytic mechanism. Serine 436 contributes to the substrate binding site. 2 N-linked (GlcNAc...) asparagine glycosylation sites follow: asparagine 455 and asparagine 487. Residues 512 to 646 enclose the P/Homo B domain; it reads VDEQHRCRQF…ELVLYGTDRE (135 aa). Cysteine 518 and cysteine 544 are oxidised to a cystine. Positions 570 to 572 match the Cell attachment site motif; it reads RGD. Residues 671 to 692 traverse the membrane as a helical segment; it reads GTQYSIFHVITLVILTFSQILY.

This sequence belongs to the peptidase S8 family. Furin subfamily. Interacts (via extracellular domain) with receptor dma-1 (via extracellular domain); the interaction promotes dma-1 internalization. Requires Ca(2+) as cofactor. Expressed in the nervous system including the ventral nerve cord, the nerve ring and the retrovesicular ganglion, and in epithelial cells. Expressed in IL2 neurons. Expressed in PVD mechanosensory neurons. Expressed in pharynx with strong expression in the g2 pharyngeal gland cells and vpi pharyngeal intestinal valve cells. Expressed in intestine.

It is found in the cell membrane. The protein localises to the perikaryon. The protein resides in the cell projection. Its subcellular location is the axon. In terms of biological role, furin-like protease which cleaves proproteins at the RX(K/R)R consensus motif. During neuronal development, regulates the formation and extension of dendrite branches and cellular positioning of various type of neurons. Together with chin-1 and cdc-42, plays a role in the development of the neuropil and is required for the guidance of axons from neurons, including SubL pioneer neurons and AIY interneurons, into the nerve ring. Its role in axon guidance in glia and pioneer neurons may be through ensuring the fmi-1 protein is correctly localized to the nerve ring. Promotes the formation, extension and self-avoidance of dendritic branches of PVD and FLP mechanosensory neurons. In PVD neurons, regulates plasma membrane levels of branching receptor dma-1 by targeting it to late endosomes and thus promotes normal dendrite branching and dendrite self-avoidance. Also controls dendrite extension in AIY and D-type motoneurons, dendrite branching in AQR sensory neurons and VC4/5 motoneurons, the normal number of dendritic branches in AVL neurons and the positioning of HSN and ALM/PLM neurons. Dispensable for maintaining dendrite branching in adults. Also regulates dauer-specific dendritic branching of IL2 neurons and dauer-specific nictation behavior. Under adverse environmental conditions, may promote dauer formation by processing insulin-like proteins ins-1 and ins-18, two daf-2/InsR antagonists. The sequence is that of Furin-like protease kpc-1 from Caenorhabditis elegans.